We begin with the raw amino-acid sequence, 469 residues long: Glutamate--tRNA ligase (469 aa).

The 'HIGH' region motif lies at 11-21; it reads PSPTGFIHLGN. The segment covering 121 to 131 has biased composition (basic and acidic residues); it reads PRYDGTWRPEP. Residues 121-141 are disordered; the sequence is PRYDGTWRPEPGKVLPEPPPG. The 'KMSKS' region signature appears at 243-247; sequence KMSKR. K246 is an ATP binding site.

The protein belongs to the class-I aminoacyl-tRNA synthetase family. Glutamate--tRNA ligase type 1 subfamily. Monomer.

Its subcellular location is the cytoplasm. It carries out the reaction tRNA(Glu) + L-glutamate + ATP = L-glutamyl-tRNA(Glu) + AMP + diphosphate. Its function is as follows. Catalyzes the attachment of glutamate to tRNA(Glu) in a two-step reaction: glutamate is first activated by ATP to form Glu-AMP and then transferred to the acceptor end of tRNA(Glu). The polypeptide is Glutamate--tRNA ligase (Burkholderia multivorans (strain ATCC 17616 / 249)).